The chain runs to 1289 residues: SH3 domain and tetratricopeptide repeat-containing protein 2 (1289 aa).

SH3 domains lie at 176–239 and 267–330; these read EGHF…PLPV and IGRG…LDSC. A disordered region spans residues 393–442; it reads SQPEGFREARSGGTWMERQTIGSRRSSGSGDSSPEEDELISASSDSYHLP. The segment covering 414-424 has biased composition (low complexity); that stretch reads GSRRSSGSGDS. 8 TPR repeats span residues 529–562, 758–791, 837–870, 1002–1038, 1085–1119, 1120–1153, 1167–1200, and 1211–1245; these read ARLC…LDGA, RTLC…GKLL, GVVH…AREM, GQLL…FVDL, LKLY…LARR, MKAL…ATLA, LVAF…CPPW, and AKVY…AVLM.

The polypeptide is SH3 domain and tetratricopeptide repeat-containing protein 2 (Sh3tc2) (Mus musculus (Mouse)).